We begin with the raw amino-acid sequence, 78 residues long: Acyl carrier protein (78 aa).

One can recognise a Carrier domain in the interval 2–77; sequence SDIASRVKAI…QAISYIEEAK (76 aa). At Ser-37 the chain carries O-(pantetheine 4'-phosphoryl)serine.

This sequence belongs to the acyl carrier protein (ACP) family. 4'-phosphopantetheine is transferred from CoA to a specific serine of apo-ACP by AcpS. This modification is essential for activity because fatty acids are bound in thioester linkage to the sulfhydryl of the prosthetic group.

Its subcellular location is the cytoplasm. It functions in the pathway lipid metabolism; fatty acid biosynthesis. Functionally, carrier of the growing fatty acid chain in fatty acid biosynthesis. This Flavobacterium johnsoniae (strain ATCC 17061 / DSM 2064 / JCM 8514 / BCRC 14874 / CCUG 350202 / NBRC 14942 / NCIMB 11054 / UW101) (Cytophaga johnsonae) protein is Acyl carrier protein.